Reading from the N-terminus, the 556-residue chain is Urocanate hydratase (556 aa).

Residues 52-53, Gln130, 176-178, Glu196, Arg201, 242-243, 263-267, 273-274, and Tyr322 contribute to the NAD(+) site; these read GG, GMG, NA, QTSAH, and YL. Cys410 is a catalytic residue. Residue Gly492 participates in NAD(+) binding.

It belongs to the urocanase family. Requires NAD(+) as cofactor.

It localises to the cytoplasm. It carries out the reaction 4-imidazolone-5-propanoate = trans-urocanate + H2O. The protein operates within amino-acid degradation; L-histidine degradation into L-glutamate; N-formimidoyl-L-glutamate from L-histidine: step 2/3. Functionally, catalyzes the conversion of urocanate to 4-imidazolone-5-propionate. This chain is Urocanate hydratase, found in Shewanella piezotolerans (strain WP3 / JCM 13877).